Reading from the N-terminus, the 212-residue chain is Cytidylate kinase (212 aa).

Gly9 to Thr17 lines the ATP pocket.

The protein belongs to the cytidylate kinase family. Type 1 subfamily.

The protein localises to the cytoplasm. It catalyses the reaction CMP + ATP = CDP + ADP. The catalysed reaction is dCMP + ATP = dCDP + ADP. The polypeptide is Cytidylate kinase (Sinorhizobium medicae (strain WSM419) (Ensifer medicae)).